Here is a 238-residue protein sequence, read N- to C-terminus: NADH-quinone oxidoreductase subunit C (238 aa).

Positions 1–11 (MSTSNGSANGT) are enriched in polar residues. Residues 1 to 20 (MSTSNGSANGTNGVGLPRGD) form a disordered region.

Belongs to the complex I 30 kDa subunit family. NDH-1 is composed of 14 different subunits. Subunits NuoB, C, D, E, F, and G constitute the peripheral sector of the complex.

It localises to the cell membrane. The catalysed reaction is a quinone + NADH + 5 H(+)(in) = a quinol + NAD(+) + 4 H(+)(out). Its function is as follows. NDH-1 shuttles electrons from NADH, via FMN and iron-sulfur (Fe-S) centers, to quinones in the respiratory chain. The immediate electron acceptor for the enzyme in this species is believed to be a menaquinone. Couples the redox reaction to proton translocation (for every two electrons transferred, four hydrogen ions are translocated across the cytoplasmic membrane), and thus conserves the redox energy in a proton gradient. The protein is NADH-quinone oxidoreductase subunit C of Mycolicibacterium smegmatis (strain ATCC 700084 / mc(2)155) (Mycobacterium smegmatis).